The primary structure comprises 719 residues: Penicillin-binding protein 1A (719 aa).

The segment at 62-223 (LIADLGSERR…NQYDPYSHPE (162 aa)) is transglycosylase. Glu-91 serves as the catalytic Proton donor; for transglycosylase activity. Residues 297 to 611 (DVYTNVDQEA…RLTPLVGNGL (315 aa)) are transpeptidase. Ser-370 functions as the Acyl-ester intermediate; for transpeptidase activity in the catalytic mechanism. The tract at residues 652–719 (ARSTWSSPAP…QNQNPQPAQP (68 aa)) is disordered. A compositionally biased stretch (low complexity) spans 654–719 (STWSSPAPQQ…QNQNPQPAQP (66 aa)).

The protein in the N-terminal section; belongs to the glycosyltransferase 51 family. It in the C-terminal section; belongs to the transpeptidase family. Interacts with MreC in the elongasome.

Its subcellular location is the secreted. The catalysed reaction is [GlcNAc-(1-&gt;4)-Mur2Ac(oyl-L-Ala-gamma-D-Glu-L-Lys-D-Ala-D-Ala)](n)-di-trans,octa-cis-undecaprenyl diphosphate + beta-D-GlcNAc-(1-&gt;4)-Mur2Ac(oyl-L-Ala-gamma-D-Glu-L-Lys-D-Ala-D-Ala)-di-trans,octa-cis-undecaprenyl diphosphate = [GlcNAc-(1-&gt;4)-Mur2Ac(oyl-L-Ala-gamma-D-Glu-L-Lys-D-Ala-D-Ala)](n+1)-di-trans,octa-cis-undecaprenyl diphosphate + di-trans,octa-cis-undecaprenyl diphosphate + H(+). The enzyme catalyses Preferential cleavage: (Ac)2-L-Lys-D-Ala-|-D-Ala. Also transpeptidation of peptidyl-alanyl moieties that are N-acyl substituents of D-alanine.. It functions in the pathway cell wall biogenesis; peptidoglycan biosynthesis. In terms of biological role, cell wall formation. The sequence is that of Penicillin-binding protein 1A (pbpA) from Streptococcus pneumoniae (strain ATCC BAA-255 / R6).